Consider the following 615-residue polypeptide: Erythritol-mannosyl-transferase 1 (615 aa).

A disordered region spans residues Arg366–Glu387. Positions Thr367–Ile380 are enriched in polar residues.

Belongs to the UDP-glycosyltransferase family.

It is found in the vacuole membrane. Its pathway is secondary metabolite biosynthesis. Erythritol-mannosyl-transferase; part of the gene cluster that mediates the biosynthesis of mannosylerythritol lipids (MELs), surface-active substances that enhance the availability of water-insoluble substrates. Mannosylerythritol lipid production is responsible for hemolytic activity of Ustilago maydis. Depending on the number of acetyl groups, mannosylerythritol lipids can be differentiated into MEL A (fully acetylated), MEL B and MEL C (monoacetylated at R-6 and R-4, respectively), and the fully deacetylated MEL D. The first step in the pathway is the generation of mannosylerythritol by the glycosyltransferase EMT1 which catalyzes the transfer of GDP-mannose to the C-4 atom of meso-erythritol. This reaction has to be stereospecific, since only mannosyl-D-erythritol is generated. The produced disaccharide is subsequently acylated with fatty acids of various lengths derived from the peroxisomal beta-oxidation by the peroxisomal acyltransferases MAC1 and MAC2 at positions C-2 and C-3, repectively. The existence of MEL derivatives which carry an acetyl group at C-2 implies that at least MAC1 also accepts acetyl-CoA as a donor. The final step of MEL biosynthesis is the acetylation of the fully acylated mannosylerythritol lipids catalyzed by the acetyl-CoA-dependent acetyltransferase MAT1. MAT1 displays a relaxed regioselectivity and is able to transfer acetylgroups to both positions C-4 and C-6 of the mannosyl moiety. In Mycosarcoma maydis (Corn smut fungus), this protein is Erythritol-mannosyl-transferase 1.